Here is a 333-residue protein sequence, read N- to C-terminus: F420-dependent glucose-6-phosphate dehydrogenase (333 aa).

Residue aspartate 37 participates in coenzyme F420-(gamma-Glu)n binding. The Proton donor role is filled by histidine 38. Residues threonine 74 and 105-106 (SG) each bind coenzyme F420-(gamma-Glu)n. The active-site Proton acceptor is the glutamate 107. Residues asparagine 110, 174-175 (GG), and 177-178 (VV) contribute to the coenzyme F420-(gamma-Glu)n site. Positions 192, 195, 256, and 280 each coordinate substrate.

This sequence belongs to the F420-dependent glucose-6-phosphate dehydrogenase family. Homodimer.

The catalysed reaction is oxidized coenzyme F420-(gamma-L-Glu)(n) + D-glucose 6-phosphate + H(+) = 6-phospho-D-glucono-1,5-lactone + reduced coenzyme F420-(gamma-L-Glu)(n). Functionally, catalyzes the coenzyme F420-dependent oxidation of glucose 6-phosphate (G6P) to 6-phosphogluconolactone. In Amycolatopsis mediterranei (strain U-32), this protein is F420-dependent glucose-6-phosphate dehydrogenase.